The primary structure comprises 233 residues: Ribonuclease HII (233 aa).

The RNase H type-2 domain maps to 21–211; it reads KIIAGVDEVG…LDALPQWRHL (191 aa). Residues aspartate 27, glutamate 28, and aspartate 119 each contribute to the a divalent metal cation site.

The protein belongs to the RNase HII family. Mn(2+) serves as cofactor. The cofactor is Mg(2+).

It localises to the cytoplasm. The catalysed reaction is Endonucleolytic cleavage to 5'-phosphomonoester.. In terms of biological role, endonuclease that specifically degrades the RNA of RNA-DNA hybrids. This chain is Ribonuclease HII (rnhB), found in Streptomyces coelicolor (strain ATCC BAA-471 / A3(2) / M145).